Here is an 87-residue protein sequence, read N- to C-terminus: Small ribosomal subunit protein uS17 (87 aa).

It belongs to the universal ribosomal protein uS17 family. As to quaternary structure, part of the 30S ribosomal subunit.

Its function is as follows. One of the primary rRNA binding proteins, it binds specifically to the 5'-end of 16S ribosomal RNA. This Geobacillus sp. (strain WCH70) protein is Small ribosomal subunit protein uS17.